Consider the following 283-residue polypeptide: Putative 4-diphosphocytidyl-2-C-methyl-D-erythritol kinase (283 aa).

Lysine 10 is a catalytic residue. ATP is bound at residue 94–104 (PVCAGLGGGST). Residue aspartate 136 is part of the active site.

This sequence belongs to the GHMP kinase family. IspE subfamily.

It catalyses the reaction 4-CDP-2-C-methyl-D-erythritol + ATP = 4-CDP-2-C-methyl-D-erythritol 2-phosphate + ADP + H(+). Catalyzes the phosphorylation of the position 2 hydroxy group of 4-diphosphocytidyl-2C-methyl-D-erythritol. The polypeptide is Putative 4-diphosphocytidyl-2-C-methyl-D-erythritol kinase (Streptococcus agalactiae serotype III (strain NEM316)).